We begin with the raw amino-acid sequence, 264 residues long: JmjC domain-containing protein 8 (264 aa).

The first 23 residues, 1-23 (MAPASRLLALWALAAVALPGSGA), serve as a signal peptide directing secretion. Residues asparagine 130, asparagine 140, and asparagine 209 are each glycosylated (N-linked (GlcNAc...) asparagine). One can recognise a JmjC domain in the interval 131–264 (DTLYFFGDNN…TSVFISTFLG (134 aa)).

Oligomer. Dimer. Interacts with PKM; regulates angiogenesis and metabolism. In terms of processing, N-glycosylated.

The protein localises to the endoplasmic reticulum lumen. It is found in the cytoplasm. In terms of biological role, functions as a positive regulator of TNF-induced NF-kappa-B signaling. Regulates angiogenesis and cellular metabolism through interaction with PKM. This Homo sapiens (Human) protein is JmjC domain-containing protein 8.